The chain runs to 244 residues: UL16-binding protein 1 (244 aa).

Positions 1–25 (MAAAASPAFLLCLPLLHLLSGWSRA) are cleaved as a signal peptide. The segment at 26–117 (GWVDTHCLCY…IQVENLIPIE (92 aa)) is MHC class I alpha-1 like. Residues C50 and C66 are joined by a disulfide bond. N82 carries N-linked (GlcNAc...) asparagine glycosylation. Residues 118-208 (PLTLQARMSC…MYWEQMLDPT (91 aa)) are MHC class I alpha-2 like. C127 and C190 are disulfide-bonded. The GPI-anchor amidated glycine moiety is linked to residue G216. Positions 217 to 244 (TTQPKAMATTLSPWSLLIIFLCFILAGR) are cleaved as a propeptide — removed in mature form.

It belongs to the MHC class I family. As to quaternary structure, interacts with KLRK1/NKG2D. Does not bind to beta2-microglobulin. (Microbial infection) In CMV-infected cells, interacts with the viral glycoprotein UL16; this interaction causes ULBP1 retention in the endoplasmic reticulum and cis-Golgi and prevents binding to and activation of KLRK1/NKG2D, providing CMV with an immune evasion mechanism. In terms of tissue distribution, expressed in T-cells, B-cells, erythroleukemia cell lines and in a wide range of tissues including heart, brain, lung, liver, testis, lymph node, thymus, tonsil and bone marrow. Also found in fetal heart, brain, lung and liver.

It localises to the cell membrane. Its subcellular location is the endoplasmic reticulum. Binds and activates the KLRK1/NKG2D receptor, mediating natural killer cell cytotoxicity. The protein is UL16-binding protein 1 (ULBP1) of Homo sapiens (Human).